Consider the following 101-residue polypeptide: Putative regulatory protein Csac_2087 (101 aa).

Belongs to the RemA family.

The protein is Putative regulatory protein Csac_2087 of Caldicellulosiruptor saccharolyticus (strain ATCC 43494 / DSM 8903 / Tp8T 6331).